Reading from the N-terminus, the 508-residue chain is Glycerol kinase (508 aa).

Threonine 17 lines the ADP pocket. Threonine 17, threonine 18, and serine 19 together coordinate ATP. Threonine 17 contributes to the sn-glycerol 3-phosphate binding site. Residue arginine 21 participates in ADP binding. Sn-glycerol 3-phosphate-binding residues include arginine 87, glutamate 88, tyrosine 139, and aspartate 256. 5 residues coordinate glycerol: arginine 87, glutamate 88, tyrosine 139, aspartate 256, and glutamine 257. ADP-binding residues include threonine 278 and glycine 322. ATP is bound by residues threonine 278, glycine 322, glutamine 326, and alanine 423. ADP-binding residues include alanine 423 and asparagine 427.

Belongs to the FGGY kinase family.

It catalyses the reaction glycerol + ATP = sn-glycerol 3-phosphate + ADP + H(+). The protein operates within polyol metabolism; glycerol degradation via glycerol kinase pathway; sn-glycerol 3-phosphate from glycerol: step 1/1. Its activity is regulated as follows. Inhibited by fructose 1,6-bisphosphate (FBP). Functionally, key enzyme in the regulation of glycerol uptake and metabolism. Catalyzes the phosphorylation of glycerol to yield sn-glycerol 3-phosphate. The polypeptide is Glycerol kinase (Corynebacterium efficiens (strain DSM 44549 / YS-314 / AJ 12310 / JCM 11189 / NBRC 100395)).